A 241-amino-acid chain; its full sequence is ATP synthase subunit a (241 aa).

5 consecutive transmembrane segments (helical) span residues 23–43 (VSFT…AAFF), 83–103 (YFPY…LGML), 113–133 (IAVT…IGFA), 188–208 (VLAG…FAVV), and 209–229 (LGVT…FTIL).

Belongs to the ATPase A chain family. As to quaternary structure, F-type ATPases have 2 components, CF(1) - the catalytic core - and CF(0) - the membrane proton channel. CF(1) has five subunits: alpha(3), beta(3), gamma(1), delta(1), epsilon(1). CF(0) has four main subunits: a, b, b' and c.

It is found in the cell inner membrane. Functionally, key component of the proton channel; it plays a direct role in the translocation of protons across the membrane. The sequence is that of ATP synthase subunit a from Rhodospirillum rubrum (strain ATCC 11170 / ATH 1.1.1 / DSM 467 / LMG 4362 / NCIMB 8255 / S1).